Here is a 440-residue protein sequence, read N- to C-terminus: GTPase Der (440 aa).

EngA-type G domains lie at 3-168 (PIIA…GKMD) and 177-353 (LKLA…EEYT). GTP contacts are provided by residues 9–16 (GRPNVGKS), 56–60 (DTGGL), 119–122 (NKID), 183–190 (GKPNAGKS), 230–234 (DTAGI), and 295–298 (NKWD). Positions 354-438 (KRISTGLLNT…PIMISFENKS (85 aa)) constitute a KH-like domain.

Belongs to the TRAFAC class TrmE-Era-EngA-EngB-Septin-like GTPase superfamily. EngA (Der) GTPase family. In terms of assembly, associates with the 50S ribosomal subunit.

Functionally, GTPase that plays an essential role in the late steps of ribosome biogenesis. This is GTPase Der from Fusobacterium nucleatum subsp. nucleatum (strain ATCC 25586 / DSM 15643 / BCRC 10681 / CIP 101130 / JCM 8532 / KCTC 2640 / LMG 13131 / VPI 4355).